A 151-amino-acid chain; its full sequence is Lipoprotein signal peptidase (151 aa).

A run of 2 helical transmembrane segments spans residues 54–74 and 83–103; these read GQMW…IYLI and LLKI…IDRL. Catalysis depends on residues aspartate 110 and aspartate 125. A helical membrane pass occupies residues 120–140; that stretch reads IFNIADSALTIGVGLFLLNIL.

This sequence belongs to the peptidase A8 family.

It is found in the cell membrane. It catalyses the reaction Release of signal peptides from bacterial membrane prolipoproteins. Hydrolyzes -Xaa-Yaa-Zaa-|-(S,diacylglyceryl)Cys-, in which Xaa is hydrophobic (preferably Leu), and Yaa (Ala or Ser) and Zaa (Gly or Ala) have small, neutral side chains.. It functions in the pathway protein modification; lipoprotein biosynthesis (signal peptide cleavage). In terms of biological role, this protein specifically catalyzes the removal of signal peptides from prolipoproteins. The sequence is that of Lipoprotein signal peptidase from Shouchella clausii (strain KSM-K16) (Alkalihalobacillus clausii).